The following is a 446-amino-acid chain: MSSTWEKIDKNKIKLSVEVDENRVEDALEQAYKKVVKQVEIPGFRKGKVPRKILENRFGPEVLYEDAIEILVPEAYQEALEEHEIEPVDQPEIDIDQMEKGQPLKFNATVEVKPEVELGTYKGLEVEKEKVEVTEEDVENELKQMQEQHAEYEDVEDGEAENGDRLVIDFEGYVDGEPIEGGQAENHNIELGSNQFIPGFEEQLVGSKPGEEKEVKVTFPEDYQNEELKGKEATFNVKVKEIKKKNLLPIDDEFAKDVSDFDTLEEFKNDIRNRLEEEAERAAEQQVEEQVVTKALENAEVEIPQPMIDQEVDNMLKEFEQNLSYQGLNLDTYYKLANTDEDAMKEQFKGSAETRVKRNLVLEAIKDEEGITATEEEIDEEINKIAEQAQQEADKIKEFLEMQGRMSQLKNEIAIRKSVDLLKDEAKVTVVEKSNDSEEETQGNTE.

A PPIase FKBP-type domain is found at 163–248 (GDRLVIDFEG…VKEIKKKNLL (86 aa)).

It belongs to the FKBP-type PPIase family. Tig subfamily.

It is found in the cytoplasm. It carries out the reaction [protein]-peptidylproline (omega=180) = [protein]-peptidylproline (omega=0). Involved in protein export. Acts as a chaperone by maintaining the newly synthesized protein in an open conformation. Functions as a peptidyl-prolyl cis-trans isomerase. This is Trigger factor from Natranaerobius thermophilus (strain ATCC BAA-1301 / DSM 18059 / JW/NM-WN-LF).